The primary structure comprises 268 residues: Norsolorinic acid ketoreductase nor1 (268 aa).

The NADP(+) site is built by isoleucine 32, aspartate 79, asparagine 108, tyrosine 182, lysine 186, valine 213, and threonine 215. The active-site Proton donor is tyrosine 182. Residue lysine 186 is the Lowers pKa of active site Tyr of the active site.

It belongs to the short-chain dehydrogenases/reductases (SDR) family.

The protein localises to the cytoplasm. The protein resides in the cytosol. It localises to the vacuole. The catalysed reaction is (1'S)-averantin + NADP(+) = norsolorinic acid + NADPH + H(+). It functions in the pathway mycotoxin biosynthesis. In terms of biological role, norsolorinic acid ketoreductase; part of the fragmented gene cluster that mediates the biosynthesis of dothistromin (DOTH), a polyketide toxin very similar in structure to the aflatoxin precursor, versicolorin B. The first step of the pathway is the conversion of acetate to norsolorinic acid (NOR) and requires the fatty acid synthase subunits hexA and hexB, as well as the polyketide synthase pksA. PksA combines a hexanoyl starter unit and 7 malonyl-CoA extender units to synthesize the precursor NOR. The hexanoyl starter unit is provided to the acyl-carrier protein (ACP) domain by the fungal fatty acid synthase hexA/hexB. The second step is the conversion of NOR to averantin (AVN) and requires the norsolorinic acid ketoreductase nor1, which catalyzes the dehydration of norsolorinic acid to form (1'S)-averantin. The cytochrome P450 monooxygenase avnA then catalyzes the hydroxylation of AVN to 5'hydroxyaverantin (HAVN). The next step is performed by adhA that transforms HAVN to averufin (AVF). Averufin might then be converted to hydroxyversicolorone by cypX and avfA. Hydroxyversicolorone is further converted versiconal hemiacetal acetate (VHA) by moxY. VHA is then the substrate for the versiconal hemiacetal acetate esterase est1 to yield versiconal (VAL). Versicolorin B synthase vbsA then converts VAL to versicolorin B (VERB) by closing the bisfuran ring. Then, the activity of the versicolorin B desaturase verB leads to versicolorin A (VERA). DotB, a predicted chloroperoxidase, may perform epoxidation of the A-ring of VERA. Alternatively, a cytochrome P450, such as cypX or avnA could catalyze this step. It is also possible that another, uncharacterized, cytochrome P450 enzyme is responsible for this step. Opening of the epoxide could potentially be achieved by the epoxide hydrolase epoA. However, epoA seems not to be required for DOTH biosynthesis, but other epoxide hydrolases may have the ability to complement this hydrolysis. Alternatively, opening of the epoxide ring could be achieved non-enzymatically. The next step is the deoxygenation of ring A to yield the 5,8-dihydroxyanthraquinone which is most likely catalyzed by the NADPH dehydrogenase encoded by ver1. The last stages of DOTH biosynthesis are proposed to involve hydroxylation of the bisfuran. OrdB and norB might have oxidative roles here. An alternative possibility is that cytochrome P450 monoogenases such as avnA and cypX might perform these steps in addition to previously proposed steps. The chain is Norsolorinic acid ketoreductase nor1 from Dothistroma septosporum (strain NZE10 / CBS 128990) (Red band needle blight fungus).